A 382-amino-acid chain; its full sequence is Putative UDP-sugar transporter DDB_G0278631 (382 aa).

Helical transmembrane passes span 117-137, 183-203, 211-231, 234-254, 264-284, 302-322, and 354-374; these read FSAS…ILHI, MYSA…YFIL, IIAS…TDLS, SLGY…LIYV, YDML…LMIV, FQAY…CIFF, and IIIH…SIWY.

Belongs to the TPT transporter family. SLC35D subfamily.

The protein resides in the membrane. Its function is as follows. May be nvolved in the import of UDP-sugars. This Dictyostelium discoideum (Social amoeba) protein is Putative UDP-sugar transporter DDB_G0278631.